Here is a 79-residue protein sequence, read N- to C-terminus: Exodeoxyribonuclease 7 small subunit (79 aa).

Belongs to the XseB family. In terms of assembly, heterooligomer composed of large and small subunits.

The protein localises to the cytoplasm. It carries out the reaction Exonucleolytic cleavage in either 5'- to 3'- or 3'- to 5'-direction to yield nucleoside 5'-phosphates.. Functionally, bidirectionally degrades single-stranded DNA into large acid-insoluble oligonucleotides, which are then degraded further into small acid-soluble oligonucleotides. This Lactococcus lactis subsp. cremoris (strain SK11) protein is Exodeoxyribonuclease 7 small subunit.